A 1146-amino-acid chain; its full sequence is Reverse gyrase 1 (1146 aa).

Residues 1 to 38 (MIKAIFDTLCPNCGGEISAERLLKGLPCEKCLPEEVNR) form an RG N-terminal-type zinc finger. C10, C13, C28, and C31 together coordinate Zn(2+). ATP-binding positions include Q79 and 96–103 (APTGVGKT). A Helicase ATP-binding domain is found at 83–240 (ARKVFLGRSF…RLKEKPNKSE (158 aa)). Positions 197 to 200 (DDVD) match the DEAD box motif. One can recognise a Helicase C-terminal domain in the interval 412–565 (HLLWALLSLR…FKKIEEVDLK (154 aa)). The topoisomerase I stretch occupies residues 592-1146 (EHVKPVLVVV…KVNEFEKANV (555 aa)). The Toprim domain occupies 596 to 728 (PVLVVVESPN…NVERIEFHEV (133 aa)). Residues E602 and D697 each coordinate Mg(2+). Positions 744–1142 (NENLVKAQLV…ELYKKVNEFE (399 aa)) constitute a Topo IA-type catalytic domain. Residue Y891 is the O-(5'-phospho-DNA)-tyrosine intermediate of the active site.

It in the N-terminal section; belongs to the DEAD box helicase family. DDVD subfamily. The protein in the C-terminal section; belongs to the type IA topoisomerase family. Monomer. It depends on Zn(2+) as a cofactor. Mg(2+) is required as a cofactor.

Its subcellular location is the cytoplasm. It catalyses the reaction ATP + H2O = ADP + phosphate + H(+). Modifies the topological state of DNA by introducing positive supercoils in an ATP-dependent process, increasing the linking number in steps of +1. Binds to single-stranded DNA, transiently cleaves and then rejoins the ends, introducing a positive supercoil in the process. The scissile phosphodiester is attacked by the catalytic tyrosine of the enzyme, resulting in the formation of a DNA-(5'-phosphotyrosyl)-enzyme intermediate. Probably involved in rewinding DNA strands in regions of the chromosome that have opened up to allow replication, transcription, DNA repair and/or for DNA protection. In Aquifex aeolicus (strain VF5), this protein is Reverse gyrase 1.